The chain runs to 221 residues: Ribonuclease S-2 (221 aa).

The N-terminal stretch at 1 to 20 is a signal peptide; that stretch reads MIYIFTMVFSLNVLILSSSA. Gln31 contacts RNA. Cys37 and Cys44 are disulfide-bonded. Residues His55, 91 to 92, Phe101, 104 to 105, and 108 to 109 contribute to the RNA site; these read NV, KQ, and KH. His55 functions as the Proton donor in the catalytic mechanism. Cys70 and Cys112 are disulfide-bonded. N-linked (GlcNAc...) asparagine glycosylation occurs at Asn91. Residue Gln105 is part of the active site. His109 (proton acceptor) is an active-site residue. N-linked (GlcNAc...) asparagine glycans are attached at residues Asn137, Asn153, and Asn195. 2 disulfide bridges follow: Cys176–Cys214 and Cys191–Cys202.

This sequence belongs to the RNase T2 family. Post-translationally, N-linked core structure at Asn-91, Asn-137, and Asn-153 contains xylose and at Asn-195 contains xylose and fucose.

The protein resides in the secreted. Its subcellular location is the extracellular space. It catalyses the reaction a ribonucleotidyl-ribonucleotide-RNA + H2O = a 3'-end 3'-phospho-ribonucleotide-RNA + a 5'-end dephospho-ribonucleoside-RNA + H(+). Its function is as follows. Self-incompatibility (SI) is the inherited ability of a flowering plant to prevent self-fertilization by discriminating between self and non-self pollen during pollination. In many species, self-incompatibility is controlled by the single, multiallelic locus S. The protein is Ribonuclease S-2 of Pyrus pyrifolia (Chinese pear).